Here is a 417-residue protein sequence, read N- to C-terminus: Imidazolonepropionase (417 aa).

The Fe(3+) site is built by His80 and His82. Zn(2+) is bound by residues His80 and His82. Residues Arg89, Tyr152, and His187 each contribute to the 4-imidazolone-5-propanoate site. Residue Tyr152 participates in N-formimidoyl-L-glutamate binding. His252 provides a ligand contact to Fe(3+). His252 is a Zn(2+) binding site. Glu255 lines the 4-imidazolone-5-propanoate pocket. Asp326 is a Fe(3+) binding site. Asp326 serves as a coordination point for Zn(2+). Asn328 and Gly330 together coordinate N-formimidoyl-L-glutamate. Ser331 contributes to the 4-imidazolone-5-propanoate binding site.

Belongs to the metallo-dependent hydrolases superfamily. HutI family. Requires Zn(2+) as cofactor. Fe(3+) is required as a cofactor.

It is found in the cytoplasm. It carries out the reaction 4-imidazolone-5-propanoate + H2O = N-formimidoyl-L-glutamate. Its pathway is amino-acid degradation; L-histidine degradation into L-glutamate; N-formimidoyl-L-glutamate from L-histidine: step 3/3. Functionally, catalyzes the hydrolytic cleavage of the carbon-nitrogen bond in imidazolone-5-propanoate to yield N-formimidoyl-L-glutamate. It is the third step in the universal histidine degradation pathway. The polypeptide is Imidazolonepropionase (Bacteroides fragilis (strain ATCC 25285 / DSM 2151 / CCUG 4856 / JCM 11019 / LMG 10263 / NCTC 9343 / Onslow / VPI 2553 / EN-2)).